The sequence spans 137 residues: MLVPKRVKHRREFRGKMRGEAKGGKEVSFGEYGLQATTSHWITNRQIEAARIAMTRYMKRGGKVWIKIFPHKSYTAKAIGVRMGSGKGAPEGWVAPVKRGKVMFEIAGVSEEVAREAFRLASHKLPVKSKFVKREAE.

Belongs to the universal ribosomal protein uL16 family. As to quaternary structure, part of the 50S ribosomal subunit.

Functionally, binds 23S rRNA and is also seen to make contacts with the A and possibly P site tRNAs. The sequence is that of Large ribosomal subunit protein uL16 from Streptococcus thermophilus (strain CNRZ 1066).